We begin with the raw amino-acid sequence, 1242 residues long: DNA-directed RNA polymerase RPB2 homolog (1242 aa).

The C4-type zinc-finger motif lies at 1180-1201 (CRNCGEPAIYNASHPIYKCMNC).

The protein belongs to the RNA polymerase beta chain family. In terms of assembly, part of the viral DNA-directed RNA polymerase that consists of 8 polII-like subunits (RPB1, RPB2, RPB3, RPB5, RPB6, RPB7, RPB9, RPB10), a capping enzyme and a termination factor.

It localises to the host cytoplasm. The protein localises to the virion. The catalysed reaction is RNA(n) + a ribonucleoside 5'-triphosphate = RNA(n+1) + diphosphate. Catalytic component of the DNA-directed RNA polymerase (RNAP) that catalyzes the transcription in the cytoplasm of viral DNA into RNA using the four ribonucleoside triphosphates as substrates. Forms the polymerase active center together with RPB1. Part of the core element with the central large cleft, the clamp element that moves to open and close the cleft and the jaws that are thought to grab the incoming DNA template. In African swine fever virus (isolate Tick/Malawi/Lil 20-1/1983) (ASFV), this protein is DNA-directed RNA polymerase RPB2 homolog.